Reading from the N-terminus, the 398-residue chain is tRNA-specific 2-thiouridylase MnmA (398 aa).

ATP contacts are provided by residues 20 to 27 (AMSGGVDS) and Leu46. Cys114 serves as the catalytic Nucleophile. An intrachain disulfide couples Cys114 to Cys210. Position 138 (Gly138) interacts with ATP. Residues 160-162 (RDQ) are interaction with tRNA. Cys210 acts as the Cysteine persulfide intermediate in catalysis.

Belongs to the MnmA/TRMU family.

The protein resides in the cytoplasm. The enzyme catalyses S-sulfanyl-L-cysteinyl-[protein] + uridine(34) in tRNA + AH2 + ATP = 2-thiouridine(34) in tRNA + L-cysteinyl-[protein] + A + AMP + diphosphate + H(+). In terms of biological role, catalyzes the 2-thiolation of uridine at the wobble position (U34) of tRNA, leading to the formation of s(2)U34. The chain is tRNA-specific 2-thiouridylase MnmA from Brucella canis (strain ATCC 23365 / NCTC 10854 / RM-666).